The sequence spans 253 residues: Indole-3-glycerol phosphate synthase (253 aa).

The protein belongs to the TrpC family.

It carries out the reaction 1-(2-carboxyphenylamino)-1-deoxy-D-ribulose 5-phosphate + H(+) = (1S,2R)-1-C-(indol-3-yl)glycerol 3-phosphate + CO2 + H2O. It functions in the pathway amino-acid biosynthesis; L-tryptophan biosynthesis; L-tryptophan from chorismate: step 4/5. The sequence is that of Indole-3-glycerol phosphate synthase from Bacillus cereus (strain AH187).